The sequence spans 432 residues: MGKNVVVLGTQWGDEGKGKVVDLLTERAKYVVRYQGGHNAGHTLVINGEKTVLHLIPSGILRENVISIIGNGVVLAPDALMKEMTELEARGVPVRERLLLSEACPLILPYHVALDNAREKARGAKAIGTTGRGIGPAYEDKVARRGLRVSDLFNKETFAIKLKEIVEYHNFQLVHYYKEAAVDYQKVLDDVLAIADILTAMVVDVSELLDNARKQGELIMFEGAQGTLLDIDHGTYPYVTSSNTTAGGVATGSGLGPRYVDYVLGIVKAYSTRVGAGPFPTELNDETGEFLRKQGNEYGATTGRSRRTGWLDIVAVRRAVQINSLSGFCMTKLDVLDGLKEVKLCVGYRMPDGREVDTTPLAAEGWEGIEPIYETMPGWSETTFGVKEHSKLPQAALNYIQRVEELTGVPIDIISTGPDRDETMILRDPFDA.

GTP contacts are provided by residues G13 to K19 and G41 to T43. D14 (proton acceptor) is an active-site residue. Positions 14 and 41 each coordinate Mg(2+). Residues D14–K17, N39–H42, T130, R144, Q225, T240, and R304 each bind IMP. H42 (proton donor) is an active-site residue. A substrate-binding site is contributed by A300–R306. GTP is bound by residues R306, K332–D334, and S415–G417.

Belongs to the adenylosuccinate synthetase family. In terms of assembly, homodimer. The cofactor is Mg(2+).

The protein localises to the cytoplasm. The catalysed reaction is IMP + L-aspartate + GTP = N(6)-(1,2-dicarboxyethyl)-AMP + GDP + phosphate + 2 H(+). It functions in the pathway purine metabolism; AMP biosynthesis via de novo pathway; AMP from IMP: step 1/2. Plays an important role in the de novo pathway of purine nucleotide biosynthesis. Catalyzes the first committed step in the biosynthesis of AMP from IMP. This is Adenylosuccinate synthetase from Yersinia pestis bv. Antiqua (strain Antiqua).